The chain runs to 291 residues: Shikimate dehydrogenase (NADP(+)) (291 aa).

Residues 18-20 (SLS) and T70 contribute to the shikimate site. K74 serves as the catalytic Proton acceptor. Residues N95 and D110 each coordinate shikimate. NADP(+) is bound by residues 134-138 (GAGGA) and V228. Y230 is a binding site for shikimate. G251 provides a ligand contact to NADP(+).

This sequence belongs to the shikimate dehydrogenase family. Homodimer.

The catalysed reaction is shikimate + NADP(+) = 3-dehydroshikimate + NADPH + H(+). It participates in metabolic intermediate biosynthesis; chorismate biosynthesis; chorismate from D-erythrose 4-phosphate and phosphoenolpyruvate: step 4/7. Functionally, involved in the biosynthesis of the chorismate, which leads to the biosynthesis of aromatic amino acids. Catalyzes the reversible NADPH linked reduction of 3-dehydroshikimate (DHSA) to yield shikimate (SA). The protein is Shikimate dehydrogenase (NADP(+)) of Streptomyces avermitilis (strain ATCC 31267 / DSM 46492 / JCM 5070 / NBRC 14893 / NCIMB 12804 / NRRL 8165 / MA-4680).